The sequence spans 301 residues: Large ribosomal subunit protein uL4 (301 aa).

The interval 1-223 (MNETKTIDVL…TQALSAQPEV (223 aa)) is large ribosomal subunit protein uL4. The disordered stretch occupies residues 49–105 (QGTHATKTRGQVSGGGKKPWRQKGTGRARQGSTRAPQWVGGGTVHGPQPRSYAQRTP). The interval 224-301 (PETNVADQHP…KSDSEKEDAK (78 aa)) is unknown.

It belongs to the universal ribosomal protein uL4 family. As to quaternary structure, part of the 50S ribosomal subunit.

Its function is as follows. One of the primary rRNA binding proteins, this protein initially binds near the 5'-end of the 23S rRNA. It is important during the early stages of 50S assembly. It makes multiple contacts with different domains of the 23S rRNA in the assembled 50S subunit and ribosome. Functionally, forms part of the polypeptide exit tunnel. The protein is Large ribosomal subunit protein uL4 of Cutibacterium acnes (strain DSM 16379 / KPA171202) (Propionibacterium acnes).